Consider the following 334-residue polypeptide: Aspartate carbamoyltransferase catalytic subunit (334 aa).

The carbamoyl phosphate site is built by Arg-71 and Thr-72. Lys-99 contributes to the L-aspartate binding site. The carbamoyl phosphate site is built by Arg-121, His-151, and Gln-154. Positions 184 and 239 each coordinate L-aspartate. Carbamoyl phosphate contacts are provided by Gly-280 and Pro-281.

The protein belongs to the aspartate/ornithine carbamoyltransferase superfamily. ATCase family. In terms of assembly, heterododecamer (2C3:3R2) of six catalytic PyrB chains organized as two trimers (C3), and six regulatory PyrI chains organized as three dimers (R2).

It carries out the reaction carbamoyl phosphate + L-aspartate = N-carbamoyl-L-aspartate + phosphate + H(+). It functions in the pathway pyrimidine metabolism; UMP biosynthesis via de novo pathway; (S)-dihydroorotate from bicarbonate: step 2/3. In terms of biological role, catalyzes the condensation of carbamoyl phosphate and aspartate to form carbamoyl aspartate and inorganic phosphate, the committed step in the de novo pyrimidine nucleotide biosynthesis pathway. The polypeptide is Aspartate carbamoyltransferase catalytic subunit (Pseudomonas entomophila (strain L48)).